The sequence spans 307 residues: tRNA dimethylallyltransferase 2 (307 aa).

11-18 (GPTASGKT) is an ATP binding site. 13-18 (TASGKT) lines the substrate pocket. The tract at residues 36-39 (DSRQ) is interaction with substrate tRNA.

Belongs to the IPP transferase family. Monomer. The cofactor is Mg(2+).

The catalysed reaction is adenosine(37) in tRNA + dimethylallyl diphosphate = N(6)-dimethylallyladenosine(37) in tRNA + diphosphate. Functionally, catalyzes the transfer of a dimethylallyl group onto the adenine at position 37 in tRNAs that read codons beginning with uridine, leading to the formation of N6-(dimethylallyl)adenosine (i(6)A). This chain is tRNA dimethylallyltransferase 2, found in Phocaeicola vulgatus (strain ATCC 8482 / DSM 1447 / JCM 5826 / CCUG 4940 / NBRC 14291 / NCTC 11154) (Bacteroides vulgatus).